Consider the following 435-residue polypeptide: Adenylosuccinate synthetase (435 aa).

GTP is bound by residues glycine 13–lysine 19 and glycine 41–threonine 43. Catalysis depends on aspartate 14, which acts as the Proton acceptor. Aspartate 14 and glycine 41 together coordinate Mg(2+). IMP is bound by residues aspartate 14–lysine 17, asparagine 39–histidine 42, threonine 130, arginine 144, glutamine 225, threonine 240, and arginine 304. Catalysis depends on histidine 42, which acts as the Proton donor. Substrate is bound at residue alanine 300–arginine 306. GTP contacts are provided by residues arginine 306, lysine 332–aspartate 334, and serine 419–glycine 421.

It belongs to the adenylosuccinate synthetase family. As to quaternary structure, homodimer. It depends on Mg(2+) as a cofactor.

The protein localises to the cytoplasm. It carries out the reaction IMP + L-aspartate + GTP = N(6)-(1,2-dicarboxyethyl)-AMP + GDP + phosphate + 2 H(+). The protein operates within purine metabolism; AMP biosynthesis via de novo pathway; AMP from IMP: step 1/2. In terms of biological role, plays an important role in the de novo pathway of purine nucleotide biosynthesis. Catalyzes the first committed step in the biosynthesis of AMP from IMP. This is Adenylosuccinate synthetase from Nitrosospira multiformis (strain ATCC 25196 / NCIMB 11849 / C 71).